We begin with the raw amino-acid sequence, 426 residues long: Enolase (426 aa).

Residue Gln163 coordinates (2R)-2-phosphoglycerate. The Proton donor role is filled by Glu205. Positions 242, 283, and 310 each coordinate Mg(2+). Residues Lys335, Arg364, Ser365, and Lys386 each coordinate (2R)-2-phosphoglycerate. Catalysis depends on Lys335, which acts as the Proton acceptor.

This sequence belongs to the enolase family. Requires Mg(2+) as cofactor.

It localises to the cytoplasm. It is found in the secreted. The protein resides in the cell surface. It catalyses the reaction (2R)-2-phosphoglycerate = phosphoenolpyruvate + H2O. The protein operates within carbohydrate degradation; glycolysis; pyruvate from D-glyceraldehyde 3-phosphate: step 4/5. In terms of biological role, catalyzes the reversible conversion of 2-phosphoglycerate (2-PG) into phosphoenolpyruvate (PEP). It is essential for the degradation of carbohydrates via glycolysis. The sequence is that of Enolase from Beutenbergia cavernae (strain ATCC BAA-8 / DSM 12333 / CCUG 43141 / JCM 11478 / NBRC 16432 / NCIMB 13614 / HKI 0122).